A 186-amino-acid polypeptide reads, in one-letter code: UPF0398 protein LCA_0919 (186 aa).

It belongs to the UPF0398 family.

This chain is UPF0398 protein LCA_0919, found in Latilactobacillus sakei subsp. sakei (strain 23K) (Lactobacillus sakei subsp. sakei).